The sequence spans 275 residues: Ribosome biogenesis protein RLP7 (275 aa).

The segment at 14 to 45 is disordered; that stretch reads KRKNNDRKRLEKQEQARQRQLEQKKKNDQRSK. The segment covering 20-44 has biased composition (basic and acidic residues); that stretch reads RKRLEKQEQARQRQLEQKKKNDQRS.

The protein belongs to the universal ribosomal protein uL30 family.

The protein resides in the nucleus. It localises to the nucleolus. Its function is as follows. Involved in the biogenesis of the 60S ribosomal subunit. May act as a specificity factor that binds precursor rRNAs and tethers the enzymes that carry out the early 5' to 3' exonucleolytic reactions that generate the mature rRNAs. In Debaryomyces hansenii (strain ATCC 36239 / CBS 767 / BCRC 21394 / JCM 1990 / NBRC 0083 / IGC 2968) (Yeast), this protein is Ribosome biogenesis protein RLP7 (RLP7).